Here is a 180-residue protein sequence, read N- to C-terminus: Hypoxanthine-guanine phosphoribosyltransferase (180 aa).

Diphosphate is bound by residues Lys-43 and Gly-44. Mg(2+) contacts are provided by Glu-99 and Asp-100. Asp-103 acts as the Proton acceptor in catalysis. GMP contacts are provided by residues Lys-131, 152 to 153 (FI), and Asp-159. Arg-165 is a binding site for diphosphate.

It belongs to the purine/pyrimidine phosphoribosyltransferase family. Mg(2+) is required as a cofactor.

Its subcellular location is the cytoplasm. The enzyme catalyses IMP + diphosphate = hypoxanthine + 5-phospho-alpha-D-ribose 1-diphosphate. The catalysed reaction is GMP + diphosphate = guanine + 5-phospho-alpha-D-ribose 1-diphosphate. The protein operates within purine metabolism; IMP biosynthesis via salvage pathway; IMP from hypoxanthine: step 1/1. It participates in purine metabolism; GMP biosynthesis via salvage pathway; GMP from guanine: step 1/1. In terms of biological role, purine salvage pathway enzyme that catalyzes the transfer of the ribosyl-5-phosphate group from 5-phospho-alpha-D-ribose 1-diphosphate (PRPP) to the N9 position of the 6-oxopurines hypoxanthine and guanine to form the corresponding ribonucleotides IMP (inosine 5'-monophosphate) and GMP (guanosine 5'-monophosphate), with the release of PPi. This is Hypoxanthine-guanine phosphoribosyltransferase (hpt) from Streptococcus agalactiae serotype III (strain NEM316).